Here is a 441-residue protein sequence, read N- to C-terminus: Damage-control phosphatase ARMT1 (441 aa).

At Ala2 the chain carries N-acetylalanine. Lys40 bears the N6-acetyllysine mark. A Phosphoserine modification is found at Ser102. The Mn(2+) site is built by Asp253 and Asn254. 253–254 is a substrate binding site; sequence DN. S-adenosyl-L-methionine-binding residues include Glu258 and Asp291. Asp291 serves as a coordination point for Mn(2+). Residues 367–371 and Lys404 contribute to the substrate site; that span reads DLNYR. The Subfamily III RTxK motif motif lies at 401–404; that stretch reads RTLK.

The protein belongs to the damage-control phosphatase family. Sugar phosphate phosphatase III subfamily. Mn(2+) is required as a cofactor. It depends on Ni(2+) as a cofactor. Automethylated.

The catalysed reaction is beta-D-fructose 1-phosphate + H2O = D-fructose + phosphate. It catalyses the reaction beta-D-fructose 6-phosphate = dihydroxyacetone + D-glyceraldehyde 3-phosphate. It carries out the reaction L-glutamyl-[protein] + S-adenosyl-L-methionine = [protein]-L-glutamate 5-O-methyl ester + S-adenosyl-L-homocysteine. Metal-dependent phosphatase that shows phosphatase activity against several substrates, including fructose-1-phosphate and fructose-6-phosphate. Its preference for fructose-1-phosphate, a strong glycating agent that causes DNA damage rather than a canonical yeast metabolite, suggests a damage-control function in hexose phosphate metabolism. Has also been shown to have O-methyltransferase activity that methylates glutamate residues of target proteins to form gamma-glutamyl methyl ester residues. Possibly methylates PCNA, suggesting it is involved in the DNA damage response. This chain is Damage-control phosphatase ARMT1, found in Homo sapiens (Human).